Here is a 121-residue protein sequence, read N- to C-terminus: Phosphoribosyl-AMP cyclohydrolase (121 aa).

Asp-76 is a binding site for Mg(2+). Zn(2+) is bound at residue Cys-77. 2 residues coordinate Mg(2+): Asp-78 and Asp-80. Positions 93 and 100 each coordinate Zn(2+).

This sequence belongs to the PRA-CH family. Homodimer. Mg(2+) serves as cofactor. The cofactor is Zn(2+).

The protein resides in the cytoplasm. The enzyme catalyses 1-(5-phospho-beta-D-ribosyl)-5'-AMP + H2O = 1-(5-phospho-beta-D-ribosyl)-5-[(5-phospho-beta-D-ribosylamino)methylideneamino]imidazole-4-carboxamide. It participates in amino-acid biosynthesis; L-histidine biosynthesis; L-histidine from 5-phospho-alpha-D-ribose 1-diphosphate: step 3/9. Functionally, catalyzes the hydrolysis of the adenine ring of phosphoribosyl-AMP. In Paracoccus denitrificans (strain Pd 1222), this protein is Phosphoribosyl-AMP cyclohydrolase.